Reading from the N-terminus, the 438-residue chain is Trigger factor (438 aa).

In terms of domain architecture, PPIase FKBP-type spans 162 to 247 (GDIVTIDFEG…VKEIKVKELP (86 aa)).

The protein belongs to the FKBP-type PPIase family. Tig subfamily.

It localises to the cytoplasm. The catalysed reaction is [protein]-peptidylproline (omega=180) = [protein]-peptidylproline (omega=0). In terms of biological role, involved in protein export. Acts as a chaperone by maintaining the newly synthesized protein in an open conformation. Functions as a peptidyl-prolyl cis-trans isomerase. The sequence is that of Trigger factor from Caldicellulosiruptor saccharolyticus (strain ATCC 43494 / DSM 8903 / Tp8T 6331).